A 450-amino-acid chain; its full sequence is Cyclic GMP-AMP phosphodiesterase SMPDL3A (450 aa).

Residues 1–22 (MARLGALVCCLLAAWHCRPGLG) form the signal peptide. The Zn(2+) site is built by Asp42 and His44. Cys59 and Cys78 are disulfide-bonded. Asp107 contributes to the Zn(2+) binding site. ATP is bound at residue His111. Residues Asn124 and Asn128 are each glycosylated (N-linked (GlcNAc...) asparagine). Position 148 (Asn148) interacts with Zn(2+). 2 residues coordinate ATP: Asn148 and His149. Residues Asn219 and Asn235 are each glycosylated (N-linked (GlcNAc...) asparagine). Zn(2+)-binding residues include His249, His290, and His292. N-linked (GlcNAc...) asparagine glycosylation is found at Asn353 and Asn370. Disulfide bonds link Cys417/Cys421 and Cys427/Cys440.

The protein belongs to the acid sphingomyelinase family. Monomer. Homodimer; homodimerizes following 2',3'-cGAMP-binding. It depends on Zn(2+) as a cofactor.

It is found in the secreted. It carries out the reaction 2',3'-cGAMP + H2O = 5'-pGpA(2'-5') + H(+). The enzyme catalyses 5'-pGpA(2'-5') + H2O = 5'-GpA(2'-5') + phosphate. The catalysed reaction is a ribonucleoside 5'-triphosphate + H2O = a ribonucleoside 5'-diphosphate + phosphate + H(+). It catalyses the reaction ATP + H2O = ADP + phosphate + H(+). Functionally, cyclic-nucleotide phosphodiesterase that acts as a negative regulator of innate immunity by mediating degradation of 2',3'-cGAMP, thereby inhibiting the cGAS-STING signaling. Specifically linearizes 2',3'-cGAMP into 2'5'-bond pGpA and further hydrolyzes pGpA to produce GpA. Also has in vitro nucleotide phosphodiesterase activity with nucleoside triphosphates, such as ATP. Has in vitro activity with p-nitrophenyl-TMP. Has lower activity with nucleoside diphosphates, and no activity with nucleoside monophosphates. Has in vitro activity with CDP-choline, giving rise to CMP and phosphocholine. Has in vitro activity with CDP-ethanolamine. Does not have sphingomyelin phosphodiesterase activity. This is Cyclic GMP-AMP phosphodiesterase SMPDL3A (SMPDL3A) from Bos taurus (Bovine).